Reading from the N-terminus, the 491-residue chain is Spermatogenesis-defective protein 39 homolog (491 aa).

The residue at position 21 (T21) is a Phosphothreonine. The segment covering K72–T81 has biased composition (polar residues). Positions K72–P101 are disordered. Residue T115 is modified to Phosphothreonine. S119, S122, and S128 each carry phosphoserine. The interval Q121–R141 is disordered. A Phosphothreonine modification is found at T130.

Belongs to the SPE39 family. As to quaternary structure, interacts with VPS33B. Associates with the homotypic fusion and vacuole protein sorting (HOPS) complex; impaired by VPS33B. Interacts with RAB11A.

Its subcellular location is the cytoplasm. The protein localises to the cytoplasmic vesicle. It is found in the early endosome. It localises to the recycling endosome. The protein resides in the late endosome. In terms of biological role, proposed to be involved in endosomal maturation implicating in part VPS33B. In epithelial cells, the VPS33B:VIPAS39 complex may play a role in the apical RAB11A-dependent recycling pathway and in the maintenance of the apical-basolateral polarity. May play a role in lysosomal trafficking, probably via association with the core HOPS complex in a discrete population of endosomes; the functions seems to be independent of VPS33B. May play a role in vesicular trafficking during spermatogenesis. May be involved in direct or indirect transcriptional regulation of E-cadherin. In Mus musculus (Mouse), this protein is Spermatogenesis-defective protein 39 homolog (Vipas39).